The primary structure comprises 131 residues: Large-conductance mechanosensitive channel (131 aa).

Transmembrane regions (helical) follow at residues 8–28 (FAMR…GAFG), 30–50 (IVSS…LGGV), and 67–87 (GMFI…FVFV).

The protein belongs to the MscL family. As to quaternary structure, homopentamer.

It localises to the cell membrane. In terms of biological role, channel that opens in response to stretch forces in the membrane lipid bilayer. May participate in the regulation of osmotic pressure changes within the cell. This is Large-conductance mechanosensitive channel from Geobacillus sp. (strain WCH70).